Reading from the N-terminus, the 179-residue chain is ATP synthase subunit delta (179 aa).

This sequence belongs to the ATPase delta chain family. As to quaternary structure, F-type ATPases have 2 components, F(1) - the catalytic core - and F(0) - the membrane proton channel. F(1) has five subunits: alpha(3), beta(3), gamma(1), delta(1), epsilon(1). F(0) has three main subunits: a(1), b(2) and c(10-14). The alpha and beta chains form an alternating ring which encloses part of the gamma chain. F(1) is attached to F(0) by a central stalk formed by the gamma and epsilon chains, while a peripheral stalk is formed by the delta and b chains.

It localises to the cell membrane. In terms of biological role, f(1)F(0) ATP synthase produces ATP from ADP in the presence of a proton or sodium gradient. F-type ATPases consist of two structural domains, F(1) containing the extramembraneous catalytic core and F(0) containing the membrane proton channel, linked together by a central stalk and a peripheral stalk. During catalysis, ATP synthesis in the catalytic domain of F(1) is coupled via a rotary mechanism of the central stalk subunits to proton translocation. Functionally, this protein is part of the stalk that links CF(0) to CF(1). It either transmits conformational changes from CF(0) to CF(1) or is implicated in proton conduction. The chain is ATP synthase subunit delta from Staphylococcus epidermidis (strain ATCC 35984 / DSM 28319 / BCRC 17069 / CCUG 31568 / BM 3577 / RP62A).